Consider the following 71-residue polypeptide: Large ribosomal subunit protein bL31 (71 aa).

4 residues coordinate Zn(2+): Cys-16, Cys-18, Cys-37, and Cys-40.

It belongs to the bacterial ribosomal protein bL31 family. Type A subfamily. In terms of assembly, part of the 50S ribosomal subunit. The cofactor is Zn(2+).

In terms of biological role, binds the 23S rRNA. The chain is Large ribosomal subunit protein bL31 from Pectobacterium atrosepticum (strain SCRI 1043 / ATCC BAA-672) (Erwinia carotovora subsp. atroseptica).